The primary structure comprises 110 residues: Multidrug transporter PA4990 (110 aa).

Helical transmembrane passes span Leu-7–Phe-27, Leu-31–Met-51, Val-58–Val-78, and Pro-85–Ser-105.

It belongs to the drug/metabolite transporter (DMT) superfamily. Small multidrug resistance (SMR) (TC 2.A.7.1) family.

Its subcellular location is the cell membrane. Its function is as follows. Confers resistance to ethidium bromide, acriflavine and methyl viologen. The polypeptide is Multidrug transporter PA4990 (Pseudomonas aeruginosa (strain ATCC 15692 / DSM 22644 / CIP 104116 / JCM 14847 / LMG 12228 / 1C / PRS 101 / PAO1)).